Here is a 24-residue protein sequence, read N- to C-terminus: GFKDWIKGAAKKLIKTVASSIANE.

Expressed by the skin glands.

It is found in the secreted. Antimicrobial peptide that shows higher potency against Gram-negative bacteria than against Gram-positive bacteria. Has a very week hemolytic activity. This is Ascaphin-6 from Ascaphus truei (Coastal tailed frog).